Here is a 420-residue protein sequence, read N- to C-terminus: ATP phosphoribosyltransferase regulatory subunit (420 aa).

Belongs to the class-II aminoacyl-tRNA synthetase family. HisZ subfamily. In terms of assembly, heteromultimer composed of HisG and HisZ subunits.

It is found in the cytoplasm. It functions in the pathway amino-acid biosynthesis; L-histidine biosynthesis; L-histidine from 5-phospho-alpha-D-ribose 1-diphosphate: step 1/9. Functionally, required for the first step of histidine biosynthesis. May allow the feedback regulation of ATP phosphoribosyltransferase activity by histidine. The polypeptide is ATP phosphoribosyltransferase regulatory subunit (Bacillus thuringiensis (strain Al Hakam)).